The sequence spans 280 residues: Myelin proteolipid protein A (280 aa).

The Cytoplasmic segment spans residues 1–10; sequence MGWHDGCIRC. 2 S-palmitoyl cysteine lipidation sites follow: cysteine 7 and cysteine 10. A helical transmembrane segment spans residues 11-36; it reads MVGVPFASVIATVLCFAGVALFCGCG. Topologically, residues 37–59 are extracellular; sequence HEALSGTEKLIETYFSKNYQEYE. A helical membrane pass occupies residues 60–88; that stretch reads YLIHVINAFQYVIYGIAIFFFLFGILLLA. The Cytoplasmic portion of the chain corresponds to 89–152; sequence EGFYTTTAIK…LGKWLGHPDK (64 aa). 2 S-palmitoyl cysteine lipidation sites follow: cysteine 140 and cysteine 142. The helical transmembrane segment at 153–179 threads the bilayer; the sequence is FVGVTYIITILWILIFACSAVPVYIYF. Residues 180–239 are Extracellular-facing; it reads NTWVTCQSIAFPGKTTTSVSTLCSDARMYGVLPWNAFPGKVCGTSLLAICKTSEFQMTFH. Intrachain disulfides connect cysteine 185–cysteine 229 and cysteine 202–cysteine 221. A helical transmembrane segment spans residues 240–269; the sequence is LFIAAFVGAAATLVALLTYMVGASFNYAVL. Topologically, residues 270-280 are cytoplasmic; it reads RVTGRSDRSKF.

Belongs to the myelin proteolipid protein family.

The protein localises to the cell membrane. Functionally, this is the major myelin protein from the central nervous system. It plays an important role in the formation or maintenance of the multilamellar structure of myelin. The chain is Myelin proteolipid protein A (plp1-a) from Xenopus laevis (African clawed frog).